The primary structure comprises 630 residues: Transposase B from transposon PsiTn554 (630 aa).

Residues 216-302 form the Core-binding (CB) domain; the sequence is TYFKQLVKRY…ILEGLFSTLH (87 aa). The 188-residue stretch at 326–513 folds into the Tyr recombinase domain; the sequence is AKPRFIDEFV…FDETLKNEFT (188 aa). Residues arginine 363, lysine 391, histidine 465, arginine 468, and histidine 491 contribute to the active site. The O-(3'-phospho-DNA)-tyrosine intermediate role is filled by tyrosine 500.

This sequence belongs to the 'phage' integrase family.

This Staphylococcus aureus protein is Transposase B from transposon PsiTn554 (tnpB).